A 384-amino-acid chain; its full sequence is Ribosomal RNA small subunit methyltransferase H (384 aa).

Residues 99-101 (GGH), Asp-118, Tyr-145, Asp-169, and Gln-176 each bind S-adenosyl-L-methionine.

The protein belongs to the methyltransferase superfamily. RsmH family.

The protein localises to the cytoplasm. It catalyses the reaction cytidine(1402) in 16S rRNA + S-adenosyl-L-methionine = N(4)-methylcytidine(1402) in 16S rRNA + S-adenosyl-L-homocysteine + H(+). Functionally, specifically methylates the N4 position of cytidine in position 1402 (C1402) of 16S rRNA. This Mycobacteroides abscessus (strain ATCC 19977 / DSM 44196 / CCUG 20993 / CIP 104536 / JCM 13569 / NCTC 13031 / TMC 1543 / L948) (Mycobacterium abscessus) protein is Ribosomal RNA small subunit methyltransferase H.